Reading from the N-terminus, the 342-residue chain is MATSTETISSLAQPFVHLENPINSPLVKETIRPRNDTTITPPPTQWSYLCHPRVKEVQDEVDGYFLENWKFPSFKAVRTFLDAKFSEVTCLYFPLALDDRIHFACRLLTVLFLIDDVLEHMSFADGEAYNNRLIPISRGDVLPDRTKPEEFILYDLWESMRAHDAELANEVLEPTFVFMRAQTDRARLSIHELGHYLEYREKDVGKALLSALMRFSMGLRLSADELQDMKALEANCAKQLSVVNDIYSYDKEEEASRTGHKEGAFLCSAVKVLAEESKLGIPATKRVLWSMTREWETVHDEIVAEKIASPDGCSEAAKAYMKGLEYQMSGNEQWSKTTRRYN.

4 residues coordinate Mg(2+): aspartate 115, asparagine 244, serine 248, and glutamate 252. Arginine 340 and tyrosine 341 together coordinate (2E,6E)-farnesyl diphosphate.

It belongs to the terpene synthase family. As to quaternary structure, homodimer. Mg(2+) is required as a cofactor.

It catalyses the reaction (2E,6E)-farnesyl diphosphate = (+)-aristolochene + diphosphate. It participates in sesquiterpene biosynthesis; aristolochene biosynthesis; aristolochene from farnesyl diphosphate: step 1/1. Its function is as follows. Aristolochene synthase; part of the gene cluster that mediates the biosynthesis of PR-toxin, a bicyclic sesquiterpene belonging to the eremophilane class and acting as a mycotoxin. The first step of the pathway is catalyzed by the aristolochene synthase which performs the cyclization of trans,trans-farnesyl diphosphate (FPP) to the bicyclic sesquiterpene aristolochene. Following the formation of aristolochene, the non-oxygenated aristolochene is converted to the trioxygenated intermediate eremofortin B, via 7-epi-neopetasone. This conversion appears to involve three enzymes, a hydroxysterol oxidase-like enzyme, the quinone-oxidase prx3 that forms the quinone-type-structure in the bicyclic nucleus of aristolochene with the C8-oxo group and the C-3 hydroxyl group, and the P450 monooxygenase ORF6 that introduces the epoxide at the double bond between carbons 1 and 2. No monoxy or dioxy-intermediates have been reported to be released to the broth, so these three early oxidative reactions may be coupled together. Eremofortin B is further oxidized by another P450 monooxygenase, that introduces a second epoxide between carbons 7 and 11 prior to acetylation to eremofortin A by the acetyltransferase ORF8. The second epoxidation may be performed by a second P450 monooxygenase. After the acetylation step, eremofortin A is converted to eremofortin C and then to PR-toxin. First the conversion of eremofortin A to eremofortin C proceeds by oxidation of the side chain of the molecule at C-12 and is catalyzed by the short-chain oxidoreductase prx1. The cytochrome P450 monooxygenase ORF5 also plays a role in this step. The primary alcohol formed at C-12 is finally oxidized by the short-chain alcohol dehydrogenase prx4 that forms PR-toxin. This Penicillium roqueforti (strain FM164) protein is Aristolochene synthase.